Consider the following 395-residue polypeptide: Major outer membrane protein P.IA (395 aa).

Positions 1 to 19 (MRKKLTALVLSALPLAAVA) are cleaved as a signal peptide.

It belongs to the Gram-negative porin family. As to quaternary structure, homotrimer.

The protein resides in the cell outer membrane. Functionally, serves as a slightly cation selective porin. Major antigen on the gonococcal cell surface and it may have pathogenic properties in addition to its porin activity. This chain is Major outer membrane protein P.IA (porA), found in Neisseria meningitidis serogroup A / serotype 4A (strain DSM 15465 / Z2491).